Here is a 152-residue protein sequence, read N- to C-terminus: Heavy metal-associated isoprenylated plant protein 22 (152 aa).

Residues 28–91 (MQTVNIKVKI…TVQSTGKKKA (64 aa)) form the HMA domain. Cys-39 and Cys-42 together coordinate a metal cation. A disordered region spans residues 123–152 (SEQAQAQPGSTDDKLMSLFSDENPNACTVM). Residues 142 to 152 (SDENPNACTVM) are compositionally biased toward polar residues. Cys-149 carries the post-translational modification Cysteine methyl ester. Cys-149 is lipidated: S-farnesyl cysteine. The propeptide at 150 to 152 (TVM) is removed in mature form.

The protein belongs to the HIPP family. Interacts with ZHD11/HB29. Expressed in lateral roots and mature anthers.

Its subcellular location is the membrane. Its function is as follows. Heavy-metal-binding protein. Binds cadmium. May be involved in cadmium transport and play a role in cadmium detoxification. The polypeptide is Heavy metal-associated isoprenylated plant protein 22 (Arabidopsis thaliana (Mouse-ear cress)).